Consider the following 336-residue polypeptide: Holliday junction branch migration complex subunit RuvB (336 aa).

A large ATPase domain (RuvB-L) region spans residues 1 to 175; that stretch reads MEKYSFESVQ…FGMSFRLQFY (175 aa). ATP-binding positions include leucine 14, arginine 15, glycine 56, lysine 59, threonine 60, threonine 61, 122 to 124, arginine 165, tyrosine 175, and arginine 212; that span reads EDF. Threonine 60 serves as a coordination point for Mg(2+). A small ATPAse domain (RuvB-S) region spans residues 176–253; sequence EPKELSAIVI…CVRYALNELG (78 aa). A head domain (RuvB-H) region spans residues 256–336; that stretch reads ELGFDELDLR…IPFLEQKGLF (81 aa). Residues arginine 310 and arginine 315 each coordinate DNA.

The protein belongs to the RuvB family. Homohexamer. Forms an RuvA(8)-RuvB(12)-Holliday junction (HJ) complex. HJ DNA is sandwiched between 2 RuvA tetramers; dsDNA enters through RuvA and exits via RuvB. An RuvB hexamer assembles on each DNA strand where it exits the tetramer. Each RuvB hexamer is contacted by two RuvA subunits (via domain III) on 2 adjacent RuvB subunits; this complex drives branch migration. In the full resolvosome a probable DNA-RuvA(4)-RuvB(12)-RuvC(2) complex forms which resolves the HJ.

It localises to the cytoplasm. It catalyses the reaction ATP + H2O = ADP + phosphate + H(+). Functionally, the RuvA-RuvB-RuvC complex processes Holliday junction (HJ) DNA during genetic recombination and DNA repair, while the RuvA-RuvB complex plays an important role in the rescue of blocked DNA replication forks via replication fork reversal (RFR). RuvA specifically binds to HJ cruciform DNA, conferring on it an open structure. The RuvB hexamer acts as an ATP-dependent pump, pulling dsDNA into and through the RuvAB complex. RuvB forms 2 homohexamers on either side of HJ DNA bound by 1 or 2 RuvA tetramers; 4 subunits per hexamer contact DNA at a time. Coordinated motions by a converter formed by DNA-disengaged RuvB subunits stimulates ATP hydrolysis and nucleotide exchange. Immobilization of the converter enables RuvB to convert the ATP-contained energy into a lever motion, pulling 2 nucleotides of DNA out of the RuvA tetramer per ATP hydrolyzed, thus driving DNA branch migration. The RuvB motors rotate together with the DNA substrate, which together with the progressing nucleotide cycle form the mechanistic basis for DNA recombination by continuous HJ branch migration. Branch migration allows RuvC to scan DNA until it finds its consensus sequence, where it cleaves and resolves cruciform DNA. In Helicobacter hepaticus (strain ATCC 51449 / 3B1), this protein is Holliday junction branch migration complex subunit RuvB.